We begin with the raw amino-acid sequence, 282 residues long: Purine nucleoside phosphorylase (282 aa).

Phosphate is bound by residues Ser46, His78, and 103–105 (RTH). Glu204 is a catalytic residue. Glu204 is an a purine D-ribonucleoside binding site. Ser223 lines the phosphate pocket. Asn246 is a binding site for a purine D-ribonucleoside.

This sequence belongs to the PNP/MTAP phosphorylase family. Homotrimer.

It carries out the reaction a purine 2'-deoxy-D-ribonucleoside + phosphate = a purine nucleobase + 2-deoxy-alpha-D-ribose 1-phosphate. The protein operates within purine metabolism; purine nucleoside salvage. Its function is as follows. The purine nucleoside phosphorylases catalyze the phosphorolytic breakdown of the N-glycosidic bond in the beta-(deoxy)ribonucleoside molecules, with the formation of the corresponding free purine bases and pentose-1-phosphate. Cleaves guanosine, inosine, 2'-deoxyguanosine and 2'-deoxyinosine. The polypeptide is Purine nucleoside phosphorylase (punA) (Cellulomonas sp).